A 92-amino-acid polypeptide reads, in one-letter code: DNA-binding protein HU (92 aa).

Residues 58–92 (AGTARNPRTGETVNRPASKTARFQVGEGLKSSLNS) form a disordered region.

It belongs to the bacterial histone-like protein family. Homodimer.

Functionally, histone-like DNA-binding protein which is capable of wrapping DNA to stabilize it, and thus to prevent its denaturation under extreme environmental conditions. This chain is DNA-binding protein HU (hup), found in Caulobacter vibrioides (strain ATCC 19089 / CIP 103742 / CB 15) (Caulobacter crescentus).